The following is a 558-amino-acid chain: 2-isopropylmalate synthase (558 aa).

A Pyruvate carboxyltransferase domain is found at 30 to 303 (PIWCSVDLRD…DPELDCRDIE (274 aa)). Positions 39, 242, 244, and 278 each coordinate Mg(2+). Residues 437 to 558 (QPNARIKFVD…ANRVLEERAK (122 aa)) are regulatory domain.

Belongs to the alpha-IPM synthase/homocitrate synthase family. LeuA type 2 subfamily. In terms of assembly, homodimer. Mg(2+) is required as a cofactor.

The protein localises to the cytoplasm. It carries out the reaction 3-methyl-2-oxobutanoate + acetyl-CoA + H2O = (2S)-2-isopropylmalate + CoA + H(+). The protein operates within amino-acid biosynthesis; L-leucine biosynthesis; L-leucine from 3-methyl-2-oxobutanoate: step 1/4. Its function is as follows. Catalyzes the condensation of the acetyl group of acetyl-CoA with 3-methyl-2-oxobutanoate (2-ketoisovalerate) to form 3-carboxy-3-hydroxy-4-methylpentanoate (2-isopropylmalate). This chain is 2-isopropylmalate synthase, found in Agrobacterium fabrum (strain C58 / ATCC 33970) (Agrobacterium tumefaciens (strain C58)).